Consider the following 161-residue polypeptide: Large ribosomal subunit protein uL15 (161 aa).

Residues 1–13 (MKLNELRDNEGAA) are compositionally biased toward basic and acidic residues. The segment at 1–51 (MKLNELRDNEGAARKKKRVARGPGSGKGKTAGRGIKGQKSRSGVALNGYEG) is disordered. Gly residues predominate over residues 23–35 (PGSGKGKTAGRGI).

It belongs to the universal ribosomal protein uL15 family. Part of the 50S ribosomal subunit.

In terms of biological role, binds to the 23S rRNA. The chain is Large ribosomal subunit protein uL15 from Cereibacter sphaeroides (strain ATCC 17023 / DSM 158 / JCM 6121 / CCUG 31486 / LMG 2827 / NBRC 12203 / NCIMB 8253 / ATH 2.4.1.) (Rhodobacter sphaeroides).